The chain runs to 66 residues: DNA-directed RNA polymerase subunit Rpo10 (66 aa).

The Zn(2+) site is built by Cys-7, Cys-10, Cys-44, and Cys-45.

Belongs to the archaeal Rpo10/eukaryotic RPB10 RNA polymerase subunit family. As to quaternary structure, part of the RNA polymerase complex. Zn(2+) is required as a cofactor.

The protein resides in the cytoplasm. It carries out the reaction RNA(n) + a ribonucleoside 5'-triphosphate = RNA(n+1) + diphosphate. Its function is as follows. DNA-dependent RNA polymerase (RNAP) catalyzes the transcription of DNA into RNA using the four ribonucleoside triphosphates as substrates. This is DNA-directed RNA polymerase subunit Rpo10 from Pyrobaculum neutrophilum (strain DSM 2338 / JCM 9278 / NBRC 100436 / V24Sta) (Thermoproteus neutrophilus).